Here is a 264-residue protein sequence, read N- to C-terminus: 4-oxalocrotonate decarboxylase (264 aa).

It belongs to the hydratase/decarboxylase family.

The catalysed reaction is (3E)-2-oxohex-3-enedioate + H(+) = 2-oxopent-4-enoate + CO2. The protein operates within xenobiotic degradation; toluene degradation. In Pseudomonas putida (Arthrobacter siderocapsulatus), this protein is 4-oxalocrotonate decarboxylase (xylI).